Consider the following 247-residue polypeptide: 5'-nucleotidase SurE (247 aa).

Residues Asp-8, Asp-9, Ser-39, and Asn-91 each contribute to the a divalent metal cation site.

This sequence belongs to the SurE nucleotidase family. It depends on a divalent metal cation as a cofactor.

The protein localises to the cytoplasm. It carries out the reaction a ribonucleoside 5'-phosphate + H2O = a ribonucleoside + phosphate. Nucleotidase that shows phosphatase activity on nucleoside 5'-monophosphates. The sequence is that of 5'-nucleotidase SurE from Methylobacillus flagellatus (strain ATCC 51484 / DSM 6875 / VKM B-1610 / KT).